A 183-amino-acid polypeptide reads, in one-letter code: Troponin I, fast skeletal muscle (183 aa).

Ser-2 carries the post-translational modification N-acetylserine. The involved in binding TNC stretch occupies residues Ser-2 to His-48. The segment at Ser-97–Met-117 is involved in binding TNC and actin.

This sequence belongs to the troponin I family. In terms of assembly, binds to actin and tropomyosin. In terms of processing, the N-terminus is blocked.

Functionally, troponin I is the inhibitory subunit of troponin, the thin filament regulatory complex which confers calcium-sensitivity to striated muscle actomyosin ATPase activity. The polypeptide is Troponin I, fast skeletal muscle (TNNI2) (Gallus gallus (Chicken)).